Here is a 411-residue protein sequence, read N- to C-terminus: Kelch domain-containing protein 10 (411 aa).

Kelch repeat units follow at residues asparagine 72–histidine 133, leucine 135–glycine 186, phenylalanine 187–glutamine 239, arginine 240–histidine 288, glutamate 296–proline 342, and cysteine 345–histidine 388.

This sequence belongs to the KLHDC10 family. In terms of assembly, component of a CRL2 E3 ubiquitin-protein ligase complex, also named ECS (Elongin BC-CUL2/5-SOCS-box protein) complex, composed of CUL2, Elongin BC (ELOB and ELOC), RBX1 and substrate-specific adapter KLHDC10.

The protein operates within protein modification; protein ubiquitination. Functionally, substrate-recognition component of a Cul2-RING (CRL2) E3 ubiquitin-protein ligase complex of the DesCEND (destruction via C-end degrons) pathway, which recognizes a C-degron located at the extreme C terminus of target proteins, leading to their ubiquitination and degradation. The C-degron recognized by the DesCEND pathway is usually a motif of less than ten residues and can be present in full-length proteins, truncated proteins or proteolytically cleaved forms. The CRL2(KLHDC10) complex specifically recognizes proteins with a proline-glycine (Pro-Gly) or an alanine tail (CAT tail) at the C-terminus, leading to their ubiquitination and degradation. The CRL2(KLHDC10) complex is involved in the ribosome-associated quality control (RQC) pathway, which mediates the extraction of incompletely synthesized nascent chains from stalled ribosomes: CRL2(KLHDC10) acts downstream of NEMF and recognizes CAT tails associated with stalled nascent chains, leading to their ubiquitination and degradation. This is Kelch domain-containing protein 10 from Xenopus tropicalis (Western clawed frog).